Here is a 126-residue protein sequence, read N- to C-terminus: Glycine cleavage system H protein (126 aa).

Positions Ile-22–Lys-104 constitute a Lipoyl-binding domain. Lys-63 carries the N6-lipoyllysine modification.

Belongs to the GcvH family. As to quaternary structure, the glycine cleavage system is composed of four proteins: P, T, L and H. The cofactor is (R)-lipoate.

The glycine cleavage system catalyzes the degradation of glycine. The H protein shuttles the methylamine group of glycine from the P protein to the T protein. The polypeptide is Glycine cleavage system H protein (Phocaeicola vulgatus (strain ATCC 8482 / DSM 1447 / JCM 5826 / CCUG 4940 / NBRC 14291 / NCTC 11154) (Bacteroides vulgatus)).